The following is a 275-amino-acid chain: Dermonecrotic toxin SpeSicTox-betaIIA2i (275 aa).

The active site involves histidine 5. Mg(2+) contacts are provided by glutamate 25 and aspartate 27. Residue histidine 41 is the Nucleophile of the active site. Intrachain disulfides connect cysteine 45–cysteine 51 and cysteine 47–cysteine 190. Aspartate 85 lines the Mg(2+) pocket.

The protein belongs to the arthropod phospholipase D family. Class II subfamily. Requires Mg(2+) as cofactor. In terms of tissue distribution, expressed by the venom gland.

The protein resides in the secreted. The enzyme catalyses an N-(acyl)-sphingosylphosphocholine = an N-(acyl)-sphingosyl-1,3-cyclic phosphate + choline. It carries out the reaction an N-(acyl)-sphingosylphosphoethanolamine = an N-(acyl)-sphingosyl-1,3-cyclic phosphate + ethanolamine. It catalyses the reaction a 1-acyl-sn-glycero-3-phosphocholine = a 1-acyl-sn-glycero-2,3-cyclic phosphate + choline. The catalysed reaction is a 1-acyl-sn-glycero-3-phosphoethanolamine = a 1-acyl-sn-glycero-2,3-cyclic phosphate + ethanolamine. In terms of biological role, dermonecrotic toxins cleave the phosphodiester linkage between the phosphate and headgroup of certain phospholipids (sphingolipid and lysolipid substrates), forming an alcohol (often choline) and a cyclic phosphate. This toxin acts on sphingomyelin (SM). It may also act on ceramide phosphoethanolamine (CPE), lysophosphatidylcholine (LPC) and lysophosphatidylethanolamine (LPE), but not on lysophosphatidylserine (LPS), and lysophosphatidylglycerol (LPG). It acts by transphosphatidylation, releasing exclusively cyclic phosphate products as second products. Induces dermonecrosis, hemolysis, increased vascular permeability, edema, inflammatory response, and platelet aggregation. This chain is Dermonecrotic toxin SpeSicTox-betaIIA2i, found in Sicarius peruensis (Six-eyed sand spider).